The chain runs to 586 residues: Arginine--tRNA ligase (586 aa).

Residues 133-143 carry the 'HIGH' region motif; sequence ANPTGPLNIVS.

This sequence belongs to the class-I aminoacyl-tRNA synthetase family. As to quaternary structure, monomer.

The protein resides in the cytoplasm. It catalyses the reaction tRNA(Arg) + L-arginine + ATP = L-arginyl-tRNA(Arg) + AMP + diphosphate. This chain is Arginine--tRNA ligase, found in Leptospira interrogans serogroup Icterohaemorrhagiae serovar copenhageni (strain Fiocruz L1-130).